The following is an 863-amino-acid chain: MGNREMEELIPLVNRLQDAFSALGQSCLLELPQIAVVGGQSAGKSSVLENFVGRDFLPRGSGIVTRRPLVLQLVTSKAEYAEFLHCKGKKFTDFDEVRHEIEAETDRVTGMNKGISSIPINLRVYSPHVLNLTLIDLPGITKVPVGDQPPDIEYQIRDMIMQFITRENCLILAVTPANTDLANSDALKLAKEVDPQGLRTIGVITKLDLMDEGTDARDVLENKLLPLRRGYVGVVNRSQKDIDGKKDIKAAMLAERKFFLSHPAYRHIADRMGTPHLQKVLNQQLTNHIRDTLPNFRNKLQGQLLSIEHEVEAFKNFKPEDPTRKTKALLQMVQQFAVDFEKRIEGSGDQVDTLELSGGAKINRIFHERFPFEIVKMEFNEKELRREISYAIKNIHGIRTGLFTPDMAFEAIVKKQIVKLKGPSLKSVDLVMQELINTVKKCTKRLANFPRLCEETERIVANHIREREGKTKDQVLLLIDIQVSYINTNHEDFIGFANAQQRSSQVHKKSTIGNQVIRKGWLTVSNIGIMKGGSKGYWFVLTAESLSWYKDDEEKEKKYMLPLDNLKVRDVEKGFMSSKHVFALFNTEQRNVYKDYRFLELACDSQEDVDSWKASLLRAGVYPDKSVGSNKTENDENGQAENFSMDPQLERQVETIRNLVDSYMSIINKCIRDLIPKTIMHLMINNVKDFINSELLAQLYSSEDQNTLMEESAEQAQRRDEMLRMYQALKEALAIIGDINTATVSTPAPPPVDDSWLQHSRRSPPPSPTTQRRLTISAPLPRPTSGRGPAPAIPSPGPHSGAPPVPFRPGPLPPFPNSSDSFGAPPQVPSRPTRAPPSVPSRRPPPSPTRPTIIRPLESSLLD.

Positions 28 to 294 (LLELPQIAVV…LTNHIRDTLP (267 aa)) constitute a Dynamin-type G domain. Positions 38-45 (GGQSAGKS) are G1 motif. 38-46 (GGQSAGKSS) is a binding site for GTP. The G2 motif stretch occupies residues 64–66 (VTR). Residues 136–139 (DLPG) form a G3 motif region. The tract at residues 205 to 208 (TKLD) is G4 motif. Position 205–211 (205–211 (TKLDLMD)) interacts with GTP. The residue at position 231 (Tyr-231) is a Phosphotyrosine. Residues 235-238 (VNRS) form a G5 motif region. 236 to 239 (NRSQ) provides a ligand contact to GTP. Lys-299 is subject to N6-acetyllysine. Residues 515 to 621 (QVIRKGWLTV…WKASLLRAGV (107 aa)) enclose the PH domain. The residue at position 593 (Tyr-593) is a Phosphotyrosine. N6-acetyllysine is present on Lys-594. Disordered stretches follow at residues 626–647 (SVGSNKTENDENGQAENFSMDP) and 742–863 (ATVS…SLLD). The span at 627–642 (VGSNKTENDENGQAEN) shows a compositional bias: polar residues. A GED domain is found at 653–744 (VETIRNLVDS…IIGDINTATV (92 aa)). Phosphoserine is present on residues Ser-763 and Ser-767. 2 stretches are compositionally biased toward pro residues: residues 791–816 (PAIPSPGPHSGAPPVPFRPGPLPPFP) and 826–849 (PQVPSRPTRAPPSVPSRRPPPSPT). Position 847 is a phosphoserine (Ser-847).

It belongs to the TRAFAC class dynamin-like GTPase superfamily. Dynamin/Fzo/YdjA family.

The protein resides in the cytoplasm. It is found in the cytoskeleton. The catalysed reaction is GTP + H2O = GDP + phosphate + H(+). Microtubule-associated force-producing protein involved in producing microtubule bundles and able to bind and hydrolyze GTP. Most probably involved in vesicular trafficking processes, in particular endocytosis. The polypeptide is Dynamin-3 (Dnm3) (Mus musculus (Mouse)).